We begin with the raw amino-acid sequence, 132 residues long: Small ribosomal subunit protein uS9 (132 aa).

Residues 104-132 (GYLTRDPRMKERKKYGLRKARRAPQFSKR) form a disordered region. Residues 113 to 132 (KERKKYGLRKARRAPQFSKR) show a composition bias toward basic residues.

This sequence belongs to the universal ribosomal protein uS9 family.

The polypeptide is Small ribosomal subunit protein uS9 (Natranaerobius thermophilus (strain ATCC BAA-1301 / DSM 18059 / JW/NM-WN-LF)).